A 592-amino-acid chain; its full sequence is Ichor (592 aa).

A compositionally biased stretch (polar residues) spans 114–123; the sequence is NNNYMQSAYH. Disordered regions lie at residues 114–156, 343–377, 416–439, and 459–527; these read NNNY…VSSS, LQNR…QAPT, LSNP…MQAS, and HTTT…DLSG. The segment covering 124 to 148 has biased composition (low complexity); that stretch reads PQNQSNPTSTTQSNGGSNSNSNNSN. Gly residues predominate over residues 356-369; sequence SSGGGGGANQGAGI. The span at 459-469 shows a compositional bias: polar residues; that stretch reads HTTTASTTGSE. Over residues 488 to 500 the composition is skewed to low complexity; the sequence is QQQQQQQQQQQQQ. Positions 507–524 are enriched in polar residues; sequence PTTPQMSAISPSGFSASD. 2 consecutive C2H2-type zinc fingers follow at residues 536 to 558 and 564 to 586; these read HRCS…LRTH and FRCD…QQIH.

It is found in the nucleus. Its function is as follows. Transcriptional activator. In tracheal terminal cells, regulates the transcription of factors involved in the formation of a mature apical extracellular matrix (aECM) which is essential for the integrity and shape of seamless tubes. The protein is Ichor of Drosophila melanogaster (Fruit fly).